The sequence spans 318 residues: NADH-ubiquinone oxidoreductase chain 1 (318 aa).

8 helical membrane passes run 2–22 (FTIN…FLTL), 70–90 (LYMA…TPLP), 98–118 (FNLG…SILW), 140–160 (ISYG…SGSF), 173–193 (WLLL…LAET), 217–237 (AGSF…MNAL), 253–273 (ELYT…FLWI), and 294–314 (LPLT…LSGI).

This sequence belongs to the complex I subunit 1 family.

It localises to the mitochondrion inner membrane. It catalyses the reaction a ubiquinone + NADH + 5 H(+)(in) = a ubiquinol + NAD(+) + 4 H(+)(out). In terms of biological role, core subunit of the mitochondrial membrane respiratory chain NADH dehydrogenase (Complex I) that is believed to belong to the minimal assembly required for catalysis. Complex I functions in the transfer of electrons from NADH to the respiratory chain. The immediate electron acceptor for the enzyme is believed to be ubiquinone. In Sapajus apella (Brown-capped capuchin), this protein is NADH-ubiquinone oxidoreductase chain 1 (MT-ND1).